A 179-amino-acid chain; its full sequence is MAKLHDYYKSSVVAELTKQFSYTSVMQVPRIEKITLNMGVGEAINDKKLLENAASDMAIISGQKPLITKARKSVAGFKIREGYPIGCKVTLRGERMWDFLERLISIALPRVRDFRGVNGKSFDGRGNYSMGVREQIIFPEIDYDKVDRVRGLDITITTTAGTDEEGRALLAAFNFPFRK.

It belongs to the universal ribosomal protein uL5 family. As to quaternary structure, part of the 50S ribosomal subunit; part of the 5S rRNA/L5/L18/L25 subcomplex. Contacts the 5S rRNA and the P site tRNA. Forms a bridge to the 30S subunit in the 70S ribosome.

Its function is as follows. This is one of the proteins that bind and probably mediate the attachment of the 5S RNA into the large ribosomal subunit, where it forms part of the central protuberance. In the 70S ribosome it contacts protein S13 of the 30S subunit (bridge B1b), connecting the 2 subunits; this bridge is implicated in subunit movement. Contacts the P site tRNA; the 5S rRNA and some of its associated proteins might help stabilize positioning of ribosome-bound tRNAs. In Vibrio cholerae serotype O1 (strain ATCC 39541 / Classical Ogawa 395 / O395), this protein is Large ribosomal subunit protein uL5.